Here is a 173-residue protein sequence, read N- to C-terminus: Large ribosomal subunit protein bL9 (173 aa).

Belongs to the bacterial ribosomal protein bL9 family.

Binds to the 23S rRNA. The chain is Large ribosomal subunit protein bL9 from Chlamydia felis (strain Fe/C-56) (Chlamydophila felis).